Reading from the N-terminus, the 147-residue chain is D-aminoacyl-tRNA deacylase (147 aa).

Positions 136-137 (GP) match the Gly-cisPro motif, important for rejection of L-amino acids motif.

Belongs to the DTD family. Homodimer.

The protein resides in the cytoplasm. The enzyme catalyses glycyl-tRNA(Ala) + H2O = tRNA(Ala) + glycine + H(+). It catalyses the reaction a D-aminoacyl-tRNA + H2O = a tRNA + a D-alpha-amino acid + H(+). An aminoacyl-tRNA editing enzyme that deacylates mischarged D-aminoacyl-tRNAs. Also deacylates mischarged glycyl-tRNA(Ala), protecting cells against glycine mischarging by AlaRS. Acts via tRNA-based rather than protein-based catalysis; rejects L-amino acids rather than detecting D-amino acids in the active site. By recycling D-aminoacyl-tRNA to D-amino acids and free tRNA molecules, this enzyme counteracts the toxicity associated with the formation of D-aminoacyl-tRNA entities in vivo and helps enforce protein L-homochirality. This is D-aminoacyl-tRNA deacylase from Streptococcus pneumoniae serotype 4 (strain ATCC BAA-334 / TIGR4).